The primary structure comprises 665 residues: PR5-like receptor kinase (665 aa).

Residues 1 to 24 (MVEGFSLSLMFLLVSHFFVSGVMS) form the signal peptide. Residues 25 to 276 (RNFTIENKCD…TKQKSSWKLK (252 aa)) are Extracellular-facing. Residues Asn-26 and Asn-88 are each glycosylated (N-linked (GlcNAc...) asparagine). Intrachain disulfides connect Cys-33–Cys-249, Cys-81–Cys-91, Cys-96–Cys-103, Cys-153–Cys-238, Cys-158–Cys-221, Cys-166–Cys-184, Cys-188–Cys-197, and Cys-198–Cys-208. Residue Asn-163 is glycosylated (N-linked (GlcNAc...) asparagine). Asn-233 carries N-linked (GlcNAc...) asparagine glycosylation. A helical membrane pass occupies residues 277–297 (LIVGVSAALTLMILIVVVIIV). At 298–665 (RTKNMRNSEW…DVLQHGSRSS (368 aa)) the chain is on the cytoplasmic side. The 290-residue stretch at 331-620 (NSFAHVLGKG…ALQVPPNPLL (290 aa)) folds into the Protein kinase domain. Residues 337–345 (LGKGGFGTV) and Lys-360 contribute to the ATP site. The active-site Proton acceptor is Asp-455.

The protein in the N-terminal section; belongs to the thaumatin family. It in the C-terminal section; belongs to the protein kinase superfamily. Ser/Thr protein kinase family. Post-translationally, autophosphorylated in vitro. As to expression, expressed in roots. Expressed at low levels in stems.

It is found in the membrane. The catalysed reaction is L-seryl-[protein] + ATP = O-phospho-L-seryl-[protein] + ADP + H(+). It catalyses the reaction L-threonyl-[protein] + ATP = O-phospho-L-threonyl-[protein] + ADP + H(+). Its function is as follows. Possesses kinase activity in vitro. The polypeptide is PR5-like receptor kinase (Arabidopsis thaliana (Mouse-ear cress)).